Here is a 433-residue protein sequence, read N- to C-terminus: Pyrimidine-nucleoside phosphorylase (433 aa).

81 to 83 (KHS) contributes to the phosphate binding site. The K(+) site is built by Gly88 and Thr90. Residues Thr92, 108 to 110 (KMS), and Thr120 each bind phosphate. 2 residues coordinate substrate: Arg168 and Lys187. Residues Leu243, Ala246, and Glu255 each coordinate K(+).

Belongs to the thymidine/pyrimidine-nucleoside phosphorylase family. Homodimer. The cofactor is K(+).

The catalysed reaction is uridine + phosphate = alpha-D-ribose 1-phosphate + uracil. The enzyme catalyses thymidine + phosphate = 2-deoxy-alpha-D-ribose 1-phosphate + thymine. It carries out the reaction 2'-deoxyuridine + phosphate = 2-deoxy-alpha-D-ribose 1-phosphate + uracil. Functionally, catalyzes phosphorolysis of the pyrimidine nucleosides uridine, thymidine and 2'-deoxyuridine with the formation of the corresponding pyrimidine base and ribose-1-phosphate. This Staphylococcus aureus (strain MSSA476) protein is Pyrimidine-nucleoside phosphorylase (pdp).